A 208-amino-acid polypeptide reads, in one-letter code: Small ribosomal subunit protein uS4 (208 aa).

Positions 95–157 (RRIDNVVYRA…DRLKKLVRSN (63 aa)) constitute an S4 RNA-binding domain.

Belongs to the universal ribosomal protein uS4 family. As to quaternary structure, part of the 30S ribosomal subunit. Contacts protein S5. The interaction surface between S4 and S5 is involved in control of translational fidelity.

Functionally, one of the primary rRNA binding proteins, it binds directly to 16S rRNA where it nucleates assembly of the body of the 30S subunit. In terms of biological role, with S5 and S12 plays an important role in translational accuracy. The protein is Small ribosomal subunit protein uS4 of Borrelia turicatae (strain 91E135).